The chain runs to 145 residues: Lysozyme C (145 aa).

The signal sequence occupies residues 1-19 (MLFFGFLLAFLSAVPGTEG). The C-type lysozyme domain maps to 20-145 (EIIPRCELVK…RDLSSYVKGC (126 aa)). 4 disulfides stabilise this stretch: C25–C145, C49–C133, C82–C98, and C94–C112. Catalysis depends on residues E54 and D70.

The protein belongs to the glycosyl hydrolase 22 family. In terms of assembly, monomer.

The protein localises to the secreted. It carries out the reaction Hydrolysis of (1-&gt;4)-beta-linkages between N-acetylmuramic acid and N-acetyl-D-glucosamine residues in a peptidoglycan and between N-acetyl-D-glucosamine residues in chitodextrins.. Lysozymes have primarily a bacteriolytic function; those in tissues and body fluids are associated with the monocyte-macrophage system and enhance the activity of immunoagents. In Opisthocomus hoazin (Hoatzin), this protein is Lysozyme C (LYZ).